Here is a 160-residue protein sequence, read N- to C-terminus: SsrA-binding protein (160 aa).

This sequence belongs to the SmpB family.

The protein resides in the cytoplasm. Functionally, required for rescue of stalled ribosomes mediated by trans-translation. Binds to transfer-messenger RNA (tmRNA), required for stable association of tmRNA with ribosomes. tmRNA and SmpB together mimic tRNA shape, replacing the anticodon stem-loop with SmpB. tmRNA is encoded by the ssrA gene; the 2 termini fold to resemble tRNA(Ala) and it encodes a 'tag peptide', a short internal open reading frame. During trans-translation Ala-aminoacylated tmRNA acts like a tRNA, entering the A-site of stalled ribosomes, displacing the stalled mRNA. The ribosome then switches to translate the ORF on the tmRNA; the nascent peptide is terminated with the 'tag peptide' encoded by the tmRNA and targeted for degradation. The ribosome is freed to recommence translation, which seems to be the essential function of trans-translation. The chain is SsrA-binding protein from Chloroflexus aurantiacus (strain ATCC 29364 / DSM 637 / Y-400-fl).